The following is an 86-amino-acid chain: Small ribosomal subunit protein bS20 (86 aa).

It belongs to the bacterial ribosomal protein bS20 family.

Functionally, binds directly to 16S ribosomal RNA. The sequence is that of Small ribosomal subunit protein bS20 from Buchnera aphidicola subsp. Cinara cedri (strain Cc).